Reading from the N-terminus, the 315-residue chain is Gamma-hemolysin component C (315 aa).

The first 29 residues, 1-29 (MLKNKILATTLSVSLLAPLANPLLENAKA), serve as a signal peptide directing secretion.

It belongs to the aerolysin family. As to quaternary structure, toxicity requires sequential binding and synergistic association of a class S and a class F component which form heterooligomeric complexes. HlgC (class S) associates with HlgB (class F) thus forming an CB toxin.

Its function is as follows. Toxin that seems to act by forming pores in the membrane of the cell. Has a hemolytic and a leucotoxic activity. This is Gamma-hemolysin component C (hlgC) from Staphylococcus aureus (strain MSSA476).